A 1092-amino-acid chain; its full sequence is Probable arabinosyltransferase A (1092 aa).

Transmembrane regions (helical) follow at residues 21–43 (IARL…VPLL), 214–233 (AVMV…LALL), 249–271 (GLWT…IVGA), 324–346 (VWMR…RCVL), 353–372 (VAAN…AAWL), 382–399 (PLIA…ENSI), 404–426 (LWPA…QGLI), 517–534 (FAVL…MVLL), 541–563 (GAVS…LLIL), 568–590 (WAIQ…AFAF), 602–624 (ALYV…GWFY), 639–661 (IAHY…LAGW), and 682–704 (ALAS…GSMV). A disordered region spans residues 772-798 (PSGVSEHLEPEPVGTNPGTPNSEGPVD).

Belongs to the emb family.

The protein resides in the cell membrane. Arabinosyl transferase responsible for the polymerization of arabinose into the arabinan of arabinogalactan. The polypeptide is Probable arabinosyltransferase A (embA) (Mycolicibacterium smegmatis (Mycobacterium smegmatis)).